Here is a 432-residue protein sequence, read N- to C-terminus: Amino-acid acetyltransferase (432 aa).

The N-acetyltransferase domain maps to 286-425; it reads ELVREAAIED…ASLYNYQRNS (140 aa).

This sequence belongs to the acetyltransferase family. ArgA subfamily.

The protein localises to the cytoplasm. The enzyme catalyses L-glutamate + acetyl-CoA = N-acetyl-L-glutamate + CoA + H(+). It functions in the pathway amino-acid biosynthesis; L-arginine biosynthesis; N(2)-acetyl-L-ornithine from L-glutamate: step 1/4. In Pseudomonas fluorescens (strain Pf0-1), this protein is Amino-acid acetyltransferase.